The sequence spans 254 residues: NAD-dependent protein deacylase 2 (254 aa).

The Deacetylase sirtuin-type domain occupies M1 to V254. G24–W44 provides a ligand contact to NAD(+). 2 residues coordinate substrate: Y69 and R72. NAD(+) is bound at residue Q105–D108. The active-site Proton acceptor is the H123. The Zn(2+) site is built by C131, C134, C157, and C160. Residues G197–S199 and A241 contribute to the NAD(+) site.

Belongs to the sirtuin family. Class III subfamily. Requires Zn(2+) as cofactor.

Its subcellular location is the cytoplasm. It carries out the reaction N(6)-acetyl-L-lysyl-[protein] + NAD(+) + H2O = 2''-O-acetyl-ADP-D-ribose + nicotinamide + L-lysyl-[protein]. It catalyses the reaction N(6)-succinyl-L-lysyl-[protein] + NAD(+) + H2O = 2''-O-succinyl-ADP-D-ribose + nicotinamide + L-lysyl-[protein]. Functionally, NAD-dependent lysine deacetylase and desuccinylase that specifically removes acetyl and succinyl groups on target proteins. Modulates the activities of several proteins which are inactive in their acylated form. The protein is NAD-dependent protein deacylase 2 of Corynebacterium efficiens (strain DSM 44549 / YS-314 / AJ 12310 / JCM 11189 / NBRC 100395).